Here is a 146-residue protein sequence, read N- to C-terminus: Large-conductance mechanosensitive channel (146 aa).

3 consecutive transmembrane segments (helical) span residues 21 to 41, 44 to 64, and 83 to 103; these read VGII…ADLI, IIGL…LGDG, and GSFI…FLLV.

Belongs to the MscL family. As to quaternary structure, homopentamer.

It localises to the cell inner membrane. In terms of biological role, channel that opens in response to stretch forces in the membrane lipid bilayer. May participate in the regulation of osmotic pressure changes within the cell. This is Large-conductance mechanosensitive channel from Cereibacter sphaeroides (strain ATCC 17023 / DSM 158 / JCM 6121 / CCUG 31486 / LMG 2827 / NBRC 12203 / NCIMB 8253 / ATH 2.4.1.) (Rhodobacter sphaeroides).